The primary structure comprises 519 residues: Acetylcholine receptor subunit gamma (519 aa).

Residues 1–22 (MCGGQRPLFLLPLLAVCLGAKG) form the signal peptide. Residues 23-240 (RNQEERLLGD…VVFYLLIQRK (218 aa)) are Extracellular-facing. Asparagine 52 and asparagine 163 each carry an N-linked (GlcNAc...) asparagine glycan. An intrachain disulfide couples cysteine 150 to cysteine 164. 3 consecutive transmembrane segments (helical) span residues 241–265 (PLFY…IYFL), 274–292 (CTVA…FLVA), and 308–329 (YLTF…VLNV). Residues 330-476 (SLRSPHTHSM…WFLVGRVLDR (147 aa)) lie on the Cytoplasmic side of the membrane. A helical transmembrane segment spans residues 477-497 (VCFLAMLSLFVCGTAGIFLMA).

It belongs to the ligand-gated ion channel (TC 1.A.9) family. Acetylcholine receptor (TC 1.A.9.1) subfamily. Gamma/CHRNG sub-subfamily. In terms of assembly, pentamer of two alpha chains, and one each of the beta, delta, and gamma (in immature muscle) or epsilon (in mature muscle) chains.

It is found in the postsynaptic cell membrane. The protein resides in the cell membrane. The catalysed reaction is K(+)(in) = K(+)(out). The enzyme catalyses Na(+)(in) = Na(+)(out). After binding acetylcholine, the AChR responds by an extensive change in conformation that affects all subunits and leads to opening of an ion-conducting channel across the plasma membrane. This Bos taurus (Bovine) protein is Acetylcholine receptor subunit gamma (CHRNG).